The following is a 356-amino-acid chain: cGAMP-activated phospholipase (356 aa).

Residues 15–206 (LSLNGGGARG…VANNPSYIGL (192 aa)) enclose the PNPLA domain. A GXGXXG motif is present at residues 19–24 (GGGARG). The short motif at 58–62 (GTSIG) is the GXSXG element. The Nucleophile role is filled by serine 60. Residue aspartate 193 is the Proton acceptor of the active site. A DGA/G motif is present at residues 193-195 (DGG).

Belongs to the patatin family.

The enzyme catalyses a 1,2-diacyl-sn-glycero-3-phosphocholine + H2O = a 2-acyl-sn-glycero-3-phosphocholine + a fatty acid + H(+). The catalysed reaction is 1,2-di-(9Z-octadecenoyl)-sn-glycero-3-phosphoethanolamine + 2 H2O = sn-glycero-3-phosphoethanolamine + 2 (9Z)-octadecenoate + 2 H(+). Phospholipase activity is specifically activated upon 3',3'-cGAMP binding, which is produced by the cognate cyclic nucleotide synthase encoded in the same operon. In terms of biological role, effector phospholipase of a CBASS antiviral system. CBASS (cyclic oligonucleotide-based antiphage signaling system) provides immunity against bacteriophages. The CD-NTase protein (DncV) synthesizes cyclic nucleotides in response to infection; these serve as specific second messenger signals. The signals activate a diverse range of effectors, leading to bacterial cell death and thus abortive phage infection. A type II-A(GA) CBASS system. Functionally, phospholipase that is activated upon binding to the cyclic dinucleotide (CDN) second messenger 3',3'-cyclic GMP-AMP (cGAMP). Degrades phospholipids in the cell membrane. Protects E.coli against phage infection. When capV and dncV are introduced in E.coli MG1655 there is 1000-fold protection against phage P1; protection against other phage (T2, T4, T5, T6 and lambda-vir) requires the 2 subsequent genes (cap2 and cap3). Upon P1 phage infection the activating molecule is produced between 30 and 40 minutes. Activation leads to bacterial cell lysis and death, which occurs before the phage has finished its replication cycle, thus protecting non-infected bacteria by aborting the phage infection and preventing its propagation. In another paper the capV-dncV-cap2-cap3 operon gives 10(4)-10(5)-fold protection against phages lambda, T2, T4 and T6, about 1000-fold protection against P1 and 10-fold protection against T5. The sequence is that of cGAMP-activated phospholipase from Escherichia coli (strain TW11681).